Here is a 455-residue protein sequence, read N- to C-terminus: Probable carboxypeptidase MCYG_07204 (455 aa).

The signal sequence occupies residues Met-1–Ala-21. N-linked (GlcNAc...) asparagine glycosylation occurs at Asn-93. Asp-170 lines the Zn(2+) pocket. The active-site Proton acceptor is Glu-202. Position 203 (Glu-203) interacts with Zn(2+). The N-linked (GlcNAc...) asparagine glycan is linked to Asn-390.

It belongs to the peptidase M20A family. It depends on Zn(2+) as a cofactor.

It localises to the secreted. The protein is Probable carboxypeptidase MCYG_07204 of Arthroderma otae (strain ATCC MYA-4605 / CBS 113480) (Microsporum canis).